We begin with the raw amino-acid sequence, 1382 residues long: DNA-directed RNA polymerase subunit beta' (1382 aa).

4 residues coordinate Zn(2+): cysteine 70, cysteine 72, cysteine 85, and cysteine 88. Mg(2+)-binding residues include aspartate 460, aspartate 462, and aspartate 464. Zn(2+) is bound by residues cysteine 808, cysteine 882, cysteine 889, and cysteine 892.

Belongs to the RNA polymerase beta' chain family. As to quaternary structure, the RNAP catalytic core consists of 2 alpha, 1 beta, 1 beta' and 1 omega subunit. When a sigma factor is associated with the core the holoenzyme is formed, which can initiate transcription. It depends on Mg(2+) as a cofactor. Zn(2+) is required as a cofactor.

It catalyses the reaction RNA(n) + a ribonucleoside 5'-triphosphate = RNA(n+1) + diphosphate. Functionally, DNA-dependent RNA polymerase catalyzes the transcription of DNA into RNA using the four ribonucleoside triphosphates as substrates. This chain is DNA-directed RNA polymerase subunit beta', found in Geobacter sp. (strain M21).